A 359-amino-acid chain; its full sequence is Oxopyrrolidines biosynthesis cluster protein G (359 aa).

The segment at 1 to 32 (MDHLRDSLLSSLPRDSPSIGAMDYARRDREST) is disordered. Positions 7–18 (SLLSSLPRDSPS) are enriched in low complexity.

Part of the gene cluster that mediates the biosynthesis of oxopyrrolidines, polyketide-amino acid hybrid compounds with feature structures of tetramic acid. Does not seem to play a role in oxopyrrolidines A and B biosynthesis. The protein is Oxopyrrolidines biosynthesis cluster protein G of Penicillium oxalicum (strain 114-2 / CGMCC 5302) (Penicillium decumbens).